The chain runs to 471 residues: Sulfate adenylyltransferase subunit 1 (471 aa).

The region spanning 22-239 (KDMLRFLTCG…NIEIGEDDNL (218 aa)) is the tr-type G domain. The interval 31 to 38 (GSVDDGKS) is G1. Position 31–38 (31–38 (GSVDDGKS)) interacts with GTP. Positions 89 to 93 (GITID) are G2. The segment at 110-113 (DTPG) is G3. GTP contacts are provided by residues 110-114 (DTPGH) and 165-168 (NKMD). Residues 165–168 (NKMD) form a G4 region. The segment at 202–204 (SAL) is G5.

It belongs to the TRAFAC class translation factor GTPase superfamily. Classic translation factor GTPase family. CysN/NodQ subfamily. Heterodimer composed of CysD, the smaller subunit, and CysN.

It catalyses the reaction sulfate + ATP + H(+) = adenosine 5'-phosphosulfate + diphosphate. It functions in the pathway sulfur metabolism; hydrogen sulfide biosynthesis; sulfite from sulfate: step 1/3. Functionally, with CysD forms the ATP sulfurylase (ATPS) that catalyzes the adenylation of sulfate producing adenosine 5'-phosphosulfate (APS) and diphosphate, the first enzymatic step in sulfur assimilation pathway. APS synthesis involves the formation of a high-energy phosphoric-sulfuric acid anhydride bond driven by GTP hydrolysis by CysN coupled to ATP hydrolysis by CysD. This is Sulfate adenylyltransferase subunit 1 from Alteromonas mediterranea (strain DSM 17117 / CIP 110805 / LMG 28347 / Deep ecotype).